Consider the following 355-residue polypeptide: Isocitrate dehydrogenase [NAD] subunit gamma, mitochondrial (355 aa).

Position 1 (Ile-1) is a transit peptide, mitochondrion. Citrate-binding residues include Thr-82 and Asn-95. Residues Arg-98, Arg-129, and Asp-216 each coordinate substrate. Asp-216 contributes to the Mn(2+) binding site. ADP is bound by residues Asn-274, Thr-275, and Asn-286.

This sequence belongs to the isocitrate and isopropylmalate dehydrogenases family. As to quaternary structure, heterooligomer of subunits alpha (IDH3A), beta (IDH3B), and gamma (IDH3G) in the apparent ratio of 2:1:1. The heterodimer containing one IDH3A and one IDH3B subunit and the heterodimer containing one IDH3A and one IDH3G subunit assemble into a heterotetramer (which contains two subunits of IDH3A, one of IDH3B and one of IDH3G) and further into the heterooctamer. Mg(2+) serves as cofactor. The cofactor is Mn(2+).

It localises to the mitochondrion. With respect to regulation, the heterotetramer and the heterodimer composed of IDH3A and IDH3G subunits can be allosterically activated by citrate (CIT) or/and ADP, and the two activators can act independently or synergistically. The heterodimer composed of IDH3A and IDH3B subunits cannot be allosterically regulated and the allosteric regulation of the heterotetramer is through the IDH3G subunit and not the IDH3B subunit. The IDH3G subunit contains the allosteric site which consists of a CIT-binding site and an ADP-binding site, and the binding of CIT and ADP causes conformational changes at the allosteric site which are transmitted to the active site in the catalytic subunit (IDH3A) through a cascade of conformational changes at the heterodimer interface, leading to stabilization of the isocitrate-binding at the active site and thus activation of the enzyme. ATP can activate the heterotetramer and the heterodimer composed of IDH3A and IDH3G subunits at low concentrations but inhibits their activities at high concentrations, whereas ATP exhibits only inhibitory effect on the heterodimer composed of IDH3A and IDH3B subunits. In terms of biological role, regulatory subunit which plays a role in the allosteric regulation of the enzyme catalyzing the decarboxylation of isocitrate (ICT) into alpha-ketoglutarate. The heterodimer composed of the alpha (IDH3A) and beta (IDH3B) subunits and the heterodimer composed of the alpha (IDH3A) and gamma (IDH3G) subunits, have considerable basal activity but the full activity of the heterotetramer (containing two subunits of IDH3A, one of IDH3B and one of IDH3G) requires the assembly and cooperative function of both heterodimers. The sequence is that of Isocitrate dehydrogenase [NAD] subunit gamma, mitochondrial (IDH3G) from Macaca fascicularis (Crab-eating macaque).